Consider the following 119-residue polypeptide: Gas vesicle protein O1 (119 aa).

Positions methionine 1 to glutamate 12 are enriched in basic and acidic residues. A disordered region spans residues methionine 1–alanine 48. Positions glycine 26–threonine 42 are enriched in polar residues.

This sequence belongs to the gas vesicle GvpO family. Forms homodimers, forms a GvpN1-GvpO1 heterodimer, interacts with GvpC1 (via the latter's C-terminus), GvpF1, GvpI1 and GvpL1, might interact with GvpA1.

It is found in the gas vesicle. Its subcellular location is the cytoplasm. A minor component of the gas vesicle, also found in soluble extracts. May play a role in transcription and/or RNA stability and in GV assembly. Gas vesicles are hollow, gas filled proteinaceous nanostructures found in several microbial planktonic microorganisms. They allow positioning of halobacteria at the optimal depth for growth in the poorly aerated, shallow brine pools of their habitat. Its function is as follows. Expression of a 9.5 kb p-vac DNA fragment containing 2 divergently transcribed regions (gvpD-gvpE-gvpF-gvpG-gvpH-gvpI-gvpJ-gvpK-gvpL-gvpM and gvpA-gvpC-gvpN-gvpO) allows H.volcanii to produce gas vesicles. A minimal gas vesicle can be made in H.volcanii by gvpA1-gvpO1 gvpF1-gvpG1-gvpJ1-gvpK1-gvpL1-gvpM1; lack of enough GvpJ1 prevents formation. The same region restores gas vesicle production in H.halobium without the p-vac locus, but it still has the c-vac locus. The protein is Gas vesicle protein O1 of Halobacterium salinarum (strain ATCC 700922 / JCM 11081 / NRC-1) (Halobacterium halobium).